A 179-amino-acid chain; its full sequence is Large ribosomal subunit protein uL6 (179 aa).

It belongs to the universal ribosomal protein uL6 family. As to quaternary structure, part of the 50S ribosomal subunit.

In terms of biological role, this protein binds to the 23S rRNA, and is important in its secondary structure. It is located near the subunit interface in the base of the L7/L12 stalk, and near the tRNA binding site of the peptidyltransferase center. The protein is Large ribosomal subunit protein uL6 of Synechococcus elongatus (strain ATCC 33912 / PCC 7942 / FACHB-805) (Anacystis nidulans R2).